Here is a 73-residue protein sequence, read N- to C-terminus: Large ribosomal subunit protein bL31 (73 aa).

Cys-16, Cys-18, Cys-36, and Cys-39 together coordinate Zn(2+).

This sequence belongs to the bacterial ribosomal protein bL31 family. Type A subfamily. As to quaternary structure, part of the 50S ribosomal subunit. Zn(2+) serves as cofactor.

In terms of biological role, binds the 23S rRNA. The chain is Large ribosomal subunit protein bL31 from Myxococcus xanthus (strain DK1622).